A 591-amino-acid polypeptide reads, in one-letter code: Complement component C8 beta chain (591 aa).

Residues Met1 to Gly32 form the signal peptide. Positions Glu33 to Arg54 are excised as a propeptide. A TSP type-1 1 domain is found at Asp64–Gly117. 7 disulfide bridges follow: Cys65–Cys100, Cys76–Cys110, Cys79–Cys116, Cys122–Cys133, Cys127–Cys146, Cys140–Cys155, and Cys162–Cys200. C-linked (Man) tryptophan glycosylation is found at Trp70 and Trp73. The N-linked (GlcNAc...) asparagine glycan is linked to Asn101. Positions Val120 to Arg157 constitute an LDL-receptor class A domain. Positions 138, 141, 143, 145, 151, and 152 each coordinate Ca(2+). The region spanning Ile158–His504 is the MACPF domain. N-linked (GlcNAc...) asparagine glycosylation occurs at Asn243. Beta stranded transmembrane passes span Ser252–Lys259, Gly262–Ser269, Ala379–Gly386, and Val392–Ser399. A disulfide bridge links Cys378 with Cys403. The residue at position 418 (Thr418) is a Phosphothreonine. Disulfide bonds link Cys503-Cys550, Cys505-Cys521, Cys508-Cys523, and Cys525-Cys534. Residues Cys505–Glu535 form the EGF-like domain. In terms of domain architecture, TSP type-1 2 spans Asp545–Ser591. C-linked (Man) tryptophan glycans are attached at residues Trp551 and Trp554. A disulfide bridge links Cys557 with Cys590. The interval Cys568 to Ser591 is disordered.

Belongs to the complement C6/C7/C8/C9 family. As to quaternary structure, heterotrimer of 3 chains: alpha (C8A), beta (C8B) and gamma (C8G); the alpha and gamma chains are disulfide bonded. Component of the membrane attack complex (MAC), composed of complement C5b, C6, C7, C8A, C8B, C8G and multiple copies of the pore-forming subunit C9. N-glycosylated; contains one or two bound glycans. Not O-glycosylated.

It localises to the secreted. It is found in the target cell membrane. Its activity is regulated as follows. Membrane attack complex (MAC) assembly is inhibited by CD59, thereby protecting self-cells from damage during complement activation. CD59 acts by binding to the beta-haipins of C8 (C8A and C8B), forming an intermolecular beta-sheet that prevents incorporation of the multiple copies of C9 required for complete formation of the osmolytic pore. MAC assembly is also inhibited by clusterin (CLU) chaperones that inhibit polymerization of C9. Functionally, component of the membrane attack complex (MAC), a multiprotein complex activated by the complement cascade, which inserts into a target cell membrane and forms a pore, leading to target cell membrane rupture and cell lysis. The MAC is initiated by proteolytic cleavage of C5 into complement C5b in response to the classical, alternative, lectin and GZMK complement pathways. The complement pathways consist in a cascade of proteins that leads to phagocytosis and breakdown of pathogens and signaling that strengthens the adaptive immune system. C8B, together with C8A and C8G, inserts into the target membrane, but does not form pores by itself. During MAC assembly, associates with C5b, C6 and C7 to form the C5b8 intermediate complex that inserts into the target membrane and traverses the bilayer increasing membrane rigidity. This chain is Complement component C8 beta chain, found in Homo sapiens (Human).